The primary structure comprises 274 residues: Mitochondrial outer membrane protein porin 1 (274 aa).

It belongs to the eukaryotic mitochondrial porin (TC 1.B.8.1) family. As to expression, expressed in shoots and roots. Also expressed in callus, leaves, panicles, sheaths and stems.

It localises to the mitochondrion outer membrane. Functionally, forms a channel through the mitochondrial outer membrane that allows diffusion of small hydrophilic molecules. The channel adopts an open conformation at low or zero membrane potential and a closed conformation at potentials above 30-40 mV. The open state has a weak anion selectivity whereas the closed state is cation-selective. The sequence is that of Mitochondrial outer membrane protein porin 1 (VDAC1) from Oryza sativa subsp. japonica (Rice).